The following is a 671-amino-acid chain: Transcription factor xilB (671 aa).

Positions 11-46 form a DNA-binding region, zn(2)-C6 fungal-type; that stretch reads CHSCYTRKQKASESDSICDRQYPCNHCTRRRRPEEC. The segment at 48–90 is disordered; it reads YGPPPVKVPSCPPVPADQSETQPRPVESARPTRETPVDDSEAH. The span at 49 to 62 shows a compositional bias: pro residues; it reads GPPPVKVPSCPPVP. Residues 77 to 90 show a composition bias toward basic and acidic residues; that stretch reads RPTRETPVDDSEAH. The tract at residues 148 to 593 is fungal transcription factor domain; it reads PERQIIDFLV…ATLLFARSVQ (446 aa). The disordered stretch occupies residues 629–650; that stretch reads WPSLEAGDPYSMPDNFPSMAQD.

Its subcellular location is the nucleus. Functionally, transcription factor; part of the gene cluster that mediates the biosynthesis of the 6-methyl-2-pyrone derivative xylariolide D. May play a role in the regulation of the expression of the highly reducing polyketide synthase xilA and the cytochroe P450 monooxygenase xilC. This chain is Transcription factor xilB, found in Penicillium rubens (strain ATCC 28089 / DSM 1075 / NRRL 1951 / Wisconsin 54-1255) (Penicillium chrysogenum).